Reading from the N-terminus, the 555-residue chain is High-affinity gluconate transporter ght3 (555 aa).

The Cytoplasmic portion of the chain corresponds to 1–9 (MNRFITSIL). A helical transmembrane segment spans residues 10–30 (VVFISMSGWLQGADTGSISGI). The Extracellular segment spans residues 31 to 58 (LGMRDFQSRFADRYNPISNSYSYSAWRQ). A helical transmembrane segment spans residues 59–79 (ALLTGTINAGCLFGAMLSSPF). Residues 80–87 (TERIGKKY) lie on the Cytoplasmic side of the membrane. A helical transmembrane segment spans residues 88–108 (SICFFSGVYIIAELLLVTAVP). The Extracellular segment spans residues 109–112 (SWIQ). The chain crosses the membrane as a helical span at residues 113–133 (VLVGKILAGVGIGALSVLSPG). Over 134 to 144 (YQSEVAPPQIR) the chain is Cytoplasmic. Residues 145 to 165 (GAVVATYQIFSTGAALVAACI) traverse the membrane as a helical segment. Over 166 to 179 (NMGTHKLRKTASWR) the chain is Extracellular. The chain crosses the membrane as a helical span at residues 180–200 (TSFGINMLWGILLMVGVLFLP). Residues 201–266 (ESPRYLIYKG…IFGKDIRYRT (66 aa)) are Cytoplasmic-facing. The helical transmembrane segment at 267 to 285 (CLGFLVMLFRELIGNNYYF) threads the bilayer. At 286 to 301 (YYATQVFKGTGMTDIF) the chain is on the extracellular side. The helical transmembrane segment at 302 to 322 (LPAVILGAINFGTTFGALYTI) threads the bilayer. At 323–328 (DNLGRR) the chain is on the cytoplasmic side. A helical transmembrane segment spans residues 329-349 (NPLIFGAAFQSICFFIYAAVG). Topologically, residues 350–363 (DRKLIYKNGTSDHR) are extracellular. Residue N357 is glycosylated (N-linked (GlcNAc...) asparagine). The helical transmembrane segment at 364 to 384 (AGSVMIVFSCLFLFSYCCSWG) threads the bilayer. Topologically, residues 385–404 (PMGWVIVGETFPIRYRSKCA) are cytoplasmic. Residues 405–425 (SVATSGNWLGNFMISFFTPFI) traverse the membrane as a helical segment. Topologically, residues 426–432 (NNAIGFK) are extracellular. The chain crosses the membrane as a helical span at residues 433–453 (LGYIYACINLFSSFMIFFLAK). Topologically, residues 454–555 (ETKGLTLEEV…FSEDSHPTYI (102 aa)) are cytoplasmic. Residues 492–509 (KEEEKREREKSKGIRGQE) are compositionally biased toward basic and acidic residues. A disordered region spans residues 492-555 (KEEEKREREK…FSEDSHPTYI (64 aa)). Acidic residues predominate over residues 510–521 (EEFIENADEDNN). A compositionally biased stretch (low complexity) spans 522–534 (DSSSSSGSVVSAV). Basic and acidic residues predominate over residues 545 to 555 (RFSEDSHPTYI).

Belongs to the major facilitator superfamily. Sugar transporter (TC 2.A.1.1) family.

It localises to the membrane. High-affinity gluconate transporter. The chain is High-affinity gluconate transporter ght3 (ght3) from Schizosaccharomyces pombe (strain 972 / ATCC 24843) (Fission yeast).